The sequence spans 184 residues: Ras-related protein Rap-1b-like protein (184 aa).

Position 10–18 (10–18 (GSRGVGKSA)) interacts with GTP. The Effector region motif lies at 32-40 (YDPTIEDSY). Residues 57-61 (DTAGT), 116-119 (NKCD), and 147-149 (SAK) each bind GTP. C181 carries the S-geranylgeranyl cysteine lipid modification. Residues 182–184 (QLL) constitute a propeptide, removed in mature form.

It belongs to the small GTPase superfamily. Ras family.

It localises to the cell membrane. The protein resides in the cytoplasm. It is found in the cytosol. The catalysed reaction is GTP + H2O = GDP + phosphate + H(+). Probable GTP-binding protein with intrinsic GTPase activity. In Homo sapiens (Human), this protein is Ras-related protein Rap-1b-like protein.